The chain runs to 218 residues: Glycerol-3-phosphate acyltransferase (218 aa).

The next 6 membrane-spanning stretches (helical) occupy residues 3–23, 53–73, 82–102, 112–132, 142–162, and 166–186; these read FAIF…YWIA, GFPV…LSGI, FQLA…FLGF, LGVF…VFLV, IGSI…SILL, and EVSY…ILTH.

The protein belongs to the PlsY family. Probably interacts with PlsX.

Its subcellular location is the cell inner membrane. It carries out the reaction an acyl phosphate + sn-glycerol 3-phosphate = a 1-acyl-sn-glycero-3-phosphate + phosphate. Its pathway is lipid metabolism; phospholipid metabolism. In terms of biological role, catalyzes the transfer of an acyl group from acyl-phosphate (acyl-PO(4)) to glycerol-3-phosphate (G3P) to form lysophosphatidic acid (LPA). This enzyme utilizes acyl-phosphate as fatty acyl donor, but not acyl-CoA or acyl-ACP. The sequence is that of Glycerol-3-phosphate acyltransferase from Leptospira borgpetersenii serovar Hardjo-bovis (strain JB197).